The chain runs to 341 residues: tRNA N6-adenosine threonylcarbamoyltransferase (341 aa).

Fe cation contacts are provided by H115 and H119. Substrate-binding positions include 137–141 (IVSGG), D170, G183, D187, and N276. Position 304 (D304) interacts with Fe cation.

The protein belongs to the KAE1 / TsaD family. It depends on Fe(2+) as a cofactor.

It localises to the cytoplasm. It carries out the reaction L-threonylcarbamoyladenylate + adenosine(37) in tRNA = N(6)-L-threonylcarbamoyladenosine(37) in tRNA + AMP + H(+). Functionally, required for the formation of a threonylcarbamoyl group on adenosine at position 37 (t(6)A37) in tRNAs that read codons beginning with adenine. Is involved in the transfer of the threonylcarbamoyl moiety of threonylcarbamoyl-AMP (TC-AMP) to the N6 group of A37, together with TsaE and TsaB. TsaD likely plays a direct catalytic role in this reaction. This is tRNA N6-adenosine threonylcarbamoyltransferase from Staphylococcus aureus (strain MRSA252).